The following is a 321-amino-acid chain: Hex-5-enoyl-[acyl-carrier protein] acetylenase (321 aa).

2 helical membrane passes run 36–56 and 62–82; these read FLLY…LLWW and VEIG…SVGL. Positions 83–88 match the Histidine box-1 motif; it reads HRYFAH. Residues 99 to 119 form a helical membrane-spanning segment; sequence VILAILGCMGAQGPVVSWVAV. The Histidine box-2 motif lies at 120 to 124; that stretch reads HRRHH. A helical transmembrane segment spans residues 188 to 208; sequence YVVWIVLGLLIPTILGGIIHG. The Histidine box-3 motif lies at 269–273; that stretch reads QNNHH.

This sequence belongs to the fatty acid desaturase type 2 family. Requires Fe(2+) as cofactor.

The protein localises to the membrane. The catalysed reaction is 5-hexenoyl-[ACP] + 2 reduced [2Fe-2S]-[ferredoxin] + O2 + 2 H(+) = 5-hexynoyl-[ACP] + 2 oxidized [2Fe-2S]-[ferredoxin] + 2 H2O. The enzyme catalyses hexanoyl-[ACP] + 2 reduced [2Fe-2S]-[ferredoxin] + O2 + 2 H(+) = 5-hexenoyl-[ACP] + 2 oxidized [2Fe-2S]-[ferredoxin] + 2 H2O. Functionally, desaturase involved in the biosynthesis of jamaicamides, which show sodium channel blocking activity and fish toxicity. Catalyzes the conversion of 5-hexenoyl loaded onto the acyl carrier protein JamC (5-hexenoyl-JamC) to 5-hexynoyl-JamC. Can also catalyze the conversion of hexanoyl-JamC to 5-hexenoyl-JamC, but it cannot use free 5-hexenoic acid, 5-hexenoyl-CoA, 2-hexenoyl-JamC, 3-hexenoyl-JamC or 4-hexenoyl-JamC. Is specific for C(6) chains, and cannot use 4-pentenoyl-JamC, 6-heptenoyl-JamC or 7-octenoyl-JamC as substrate. In Moorena producens (strain JHB), this protein is Hex-5-enoyl-[acyl-carrier protein] acetylenase.